A 705-amino-acid chain; its full sequence is Elongation factor G 2 (705 aa).

A tr-type G domain is found at 8–288 (ERYRNIGISA…AVIDYLPSPA (281 aa)). GTP-binding positions include 17-24 (AHIDAGKT), 86-90 (DTPGH), and 140-143 (NKMD).

This sequence belongs to the TRAFAC class translation factor GTPase superfamily. Classic translation factor GTPase family. EF-G/EF-2 subfamily.

The protein localises to the cytoplasm. Catalyzes the GTP-dependent ribosomal translocation step during translation elongation. During this step, the ribosome changes from the pre-translocational (PRE) to the post-translocational (POST) state as the newly formed A-site-bound peptidyl-tRNA and P-site-bound deacylated tRNA move to the P and E sites, respectively. Catalyzes the coordinated movement of the two tRNA molecules, the mRNA and conformational changes in the ribosome. The protein is Elongation factor G 2 of Bordetella parapertussis (strain 12822 / ATCC BAA-587 / NCTC 13253).